The chain runs to 606 residues: Phosphoenolpyruvate carboxykinase [GTP] (606 aa).

Substrate contacts are provided by residues R79 and Y218 to G220. Residues K227 and H247 each contribute to the Mn(2+) site. Substrate is bound at residue S269. A270 to N275 contributes to the GTP binding site. C271 is an active-site residue. D294 contacts Mn(2+). Position 384–386 (N384–R386) interacts with substrate. Residues R386, R417, and F512–N515 each bind GTP.

It belongs to the phosphoenolpyruvate carboxykinase [GTP] family. In terms of assembly, monomer. Mn(2+) serves as cofactor.

The protein resides in the cytoplasm. It catalyses the reaction oxaloacetate + GTP = phosphoenolpyruvate + GDP + CO2. It participates in carbohydrate biosynthesis; gluconeogenesis. Catalyzes the conversion of oxaloacetate (OAA) to phosphoenolpyruvate (PEP), the rate-limiting step in the metabolic pathway that produces glucose from lactate and other precursors derived from the citric acid cycle. This is Phosphoenolpyruvate carboxykinase [GTP] from Corynebacterium jeikeium (strain K411).